Consider the following 190-residue polypeptide: Ferric nitrobindin-like protein (190 aa).

Positions 20–26 (GNWAGAG) match the GXWXGXG motif.

This sequence belongs to the nitrobindin family.

This is Ferric nitrobindin-like protein from Streptomyces griseus subsp. griseus (strain JCM 4626 / CBS 651.72 / NBRC 13350 / KCC S-0626 / ISP 5235).